The primary structure comprises 1840 residues: Collagen alpha-1(V) chain (1840 aa).

Positions 1–36 (MDVHTRWKDRLPVGPAAVPPLLLLLLLLWAPPQSRA) are cleaved as a signal peptide. A Laminin G-like domain is found at 72 to 244 (DVAYRVSKDA…DYCEHYSPDC (173 aa)). The tract at residues 231–445 (RAAYDYCEHY…MPANQDTIYE (215 aa)) is nonhelical region. Sulfotyrosine occurs at positions 234, 236, 240, 262, 263, and 271. Disordered stretches follow at residues 242–523 (PDCD…TMLM), 528–547 (FGGG…QESQ), and 561–1576 (GPAG…EVIQ). Positions 258–268 (NPDEYYPEGDG) are enriched in acidic residues. Composition is skewed to low complexity over residues 335–352 (DYDY…PYED) and 376–386 (TSTIITSNTSN). The tract at residues 446–560 (GIGGPRGEKG…ILQQARLALR (115 aa)) is interrupted collagenous region. Residues 472-487 (PPGPEGPAGLPGPPGT) are compositionally biased toward pro residues. Residues 508-523 (LPGADGLPGPPGTMLM) are compositionally biased toward low complexity. The span at 561–572 (GPAGPMGLTGRP) shows a compositional bias: low complexity. A triple-helical region region spans residues 561–1572 (GPAGPMGLTG…GLPGPPGPPG (1012 aa)). Residues Pro-572, Pro-578, and Pro-623 each carry the 4-hydroxyproline modification. Lys-629 bears the 5-hydroxylysine mark. 4-hydroxyproline is present on Pro-641. A 5-hydroxylysine modification is found at Lys-644. 4-hydroxyproline is present on residues Pro-650, Pro-656, Pro-659, Pro-677, and Pro-680. Residues 673-688 (PRGLPGEPGPRGLLGP) are compositionally biased toward low complexity. Residues Pro-682 and Pro-688 each carry the 3-hydroxyproline modification. Positions 689 to 698 (KGPPGPPGPP) are enriched in pro residues. Pro-692, Pro-698, and Pro-707 each carry 4-hydroxyproline. Residue Lys-710 is modified to 5-hydroxylysine. 4-hydroxyproline occurs at positions 719, 722, 728, and 734. The span at 724–743 (QQGNPGAQGLPGPQGAIGPP) shows a compositional bias: low complexity. 5-hydroxylysine is present on Lys-746. A compositionally biased stretch (low complexity) spans 749–758 (LGKPGLPGMP). Residues Pro-752, Pro-758, Pro-764, Pro-767, and Pro-773 each carry the 4-hydroxyproline modification. Lys-776 is modified (5-hydroxylysine). 2 positions are modified to 4-hydroxyproline: Pro-782 and Pro-791. 5-hydroxylysine occurs at positions 797, 806, 809, and 812. Position 818 is a 4-hydroxyproline (Pro-818). The residue at position 821 (Lys-821) is a 5-hydroxylysine. Position 836 is a 4-hydroxyproline (Pro-836). Over residues 839–848 (RGEDGPEGPK) the composition is skewed to basic and acidic residues. 5-hydroxylysine occurs at positions 848 and 866. Residues Pro-872, Pro-875, and Pro-878 each carry the 4-hydroxyproline modification. A 5-hydroxylysine modification is found at Lys-884. 4-hydroxyproline occurs at positions 890 and 893. Lys-899 is modified (5-hydroxylysine). 4-hydroxyproline occurs at positions 905 and 908. The segment covering 910-919 (PRGQRGPTGP) has biased composition (low complexity). Residues Pro-932 and Pro-947 each carry the 4-hydroxyproline modification. 2 stretches are compositionally biased toward low complexity: residues 973–992 (KDGL…QGKT) and 1001–1013 (VGPQ…TGPM). A 4-hydroxyproline mark is found at Pro-1019, Pro-1022, Pro-1025, and Pro-1031. The segment covering 1090 to 1106 (SPGERGPAGAAGPIGIP) has biased composition (low complexity). Pro residues predominate over residues 1108 to 1117 (RPGPQGPPGP). 4-hydroxyproline occurs at positions 1223 and 1226. A compositionally biased stretch (low complexity) spans 1261-1270 (PSGAPGADGP). The segment covering 1296–1305 (GLPGEGGPLG) has biased composition (gly residues). 2 stretches are compositionally biased toward pro residues: residues 1382–1400 (TGEP…PGPA) and 1456–1471 (SPGP…PPGL). 4-hydroxyproline is present on residues Pro-1469 and Pro-1472. The segment covering 1487–1496 (PGLIGLIGPP) has biased composition (low complexity). Over residues 1528 to 1543 (PLGPPGPPGLPGPPGP) the composition is skewed to pro residues. Low complexity predominate over residues 1544–1556 (KGAKGSSGPTGPK). A nonhelical region region spans residues 1573–1607 (EVIQPLPIQASRTRRNIDASQLLDDGAGESYLDYA). 2 positions are modified to sulfotyrosine: Tyr-1603 and Tyr-1606. The 229-residue stretch at 1611–1839 (EEIFGSLNSL…GFEVGPACFL (229 aa)) folds into the Fibrillar collagen NC1 domain.

It belongs to the fibrillar collagen family. Trimers of two alpha 1(V) and one alpha 2(V) chains in most tissues and trimers of one alpha 1(V), one alpha 2(V), and one alpha 3(V) chains in placenta. Interacts with CSPG4. Hydroxylation on proline residues within the sequence motif, GXPG, is most likely to be 4-hydroxy as this fits the requirement for 4-hydroxylation in vertebrates. Post-translationally, sulfated on 40% of tyrosines. In terms of tissue distribution, ubiquitously expressed.

It is found in the secreted. It localises to the extracellular space. The protein resides in the extracellular matrix. Type V collagen is a member of group I collagen (fibrillar forming collagen). It is a minor connective tissue component of nearly ubiquitous distribution. Type V collagen binds to DNA, heparan sulfate, thrombospondin, heparin, and insulin. This chain is Collagen alpha-1(V) chain (COL5A1), found in Cricetulus longicaudatus (Long-tailed dwarf hamster).